The sequence spans 371 residues: 4-hydroxyprotoasukamycin monooxygenase (371 aa).

It belongs to the bacterial luciferase oxidoreductase family. The cofactor is FMN.

The enzyme catalyses 4-hydroxyprotoasukamycin + NADH + O2 + H(+) = asukamycin + NAD(+) + H2O. It participates in antibiotic biosynthesis. In terms of biological role, involved in the biosynthesis of the antibiotic asukamycin. Catalyzes the epoxidation of 4-hydroxyprotoasukamycin to the final product, asukamycin. Can also convert some 4-hydroxyprotoasukamycin derivatives to their asukamycin derivatives, but cannot use protoasukamycin as substrate. Can also use NADPH, but catalytic efficiency is 20-fold higher with NADH. This Streptomyces nodosus subsp. asukaensis protein is 4-hydroxyprotoasukamycin monooxygenase.